Reading from the N-terminus, the 335-residue chain is Mitochondrial carrier protein CoAc2 (335 aa).

6 helical membrane passes run 12 to 32 (SGPGLPLAVRELLAGGVAGGV), 75 to 95 (FYRGNGASVARIVPYAALHYM), 119 to 139 (LVAGSIAGGTAVICTYPLDLV), 187 to 207 (GMAPSLYGIFPYSGLKFYFYE), 225 to 242 (LGCGSVAGLLGQTITYPL), and 280 to 302 (LFSGLSINYLKVVPSVAIGFTVY). 3 Solcar repeats span residues 17-103 (PLAV…YRRW), 113-212 (QGPV…MKSH), and 219-308 (KGII…MKVC).

Belongs to the mitochondrial carrier (TC 2.A.29) family. Expressed throughout the plant.

The protein resides in the mitochondrion inner membrane. Its function is as follows. Required for the accumulation of coenzyme A in the mitochondrial matrix. This chain is Mitochondrial carrier protein CoAc2, found in Zea mays (Maize).